Consider the following 188-residue polypeptide: Probable nicotinate-nucleotide adenylyltransferase (188 aa).

Belongs to the NadD family.

The catalysed reaction is nicotinate beta-D-ribonucleotide + ATP + H(+) = deamido-NAD(+) + diphosphate. It participates in cofactor biosynthesis; NAD(+) biosynthesis; deamido-NAD(+) from nicotinate D-ribonucleotide: step 1/1. In terms of biological role, catalyzes the reversible adenylation of nicotinate mononucleotide (NaMN) to nicotinic acid adenine dinucleotide (NaAD). The sequence is that of Probable nicotinate-nucleotide adenylyltransferase from Rhizobium meliloti (strain 1021) (Ensifer meliloti).